The primary structure comprises 706 residues: Solute carrier organic anion transporter family member 6C1 (706 aa).

Residues 1 to 24 (MAHVRNKKSDDKKAMVVAKEDTNK) form a disordered region. Topologically, residues 1 to 94 (MAHVRNKKSD…PFVQRFNNID (94 aa)) are cytoplasmic. Over residues 7 to 24 (KKSDDKKAMVVAKEDTNK) the composition is skewed to basic and acidic residues. A helical transmembrane segment spans residues 95–118 (GFMTLYVAAVLIHGALFAVVDMTL). The Extracellular segment spans residues 119 to 130 (NIYQVQFSLTRT). The helical transmembrane segment at 131 to 151 (EWYLMDFSDYIASFVVAIIIA) threads the bilayer. Over 152–159 (HFGSKGNR) the chain is Cytoplasmic. A helical transmembrane segment spans residues 160 to 180 (TRWIAASCILMGLESMLFAFP). The Extracellular segment spans residues 181–218 (FFTYEIIIPGRQSIELCMEENEKRNIICGNSVPNRSKC). N-linked (GlcNAc...) asparagine glycosylation occurs at asparagine 214. The helical transmembrane segment at 219 to 241 (IYFHIAGQCIHGIAGMPIYILGI) threads the bilayer. Residues 242-253 (TFIFDHIPTSSC) are Cytoplasmic-facing. The chain crosses the membrane as a helical span at residues 254-277 (GFYLAIGHSAYLIGYLLGMVGGLQ). Topologically, residues 278-301 (NFQPPPKEKTVEIEPAKVYQLLQS) are extracellular. A helical transmembrane segment spans residues 302–324 (GWWKTFLIIAAISFCVSFMMVCF). Topologically, residues 325 to 374 (PTSLPGAHKLRLAKRKEPPTIDRRLKDMKIQPHLKGFLHNIWHILKNPLM) are cytoplasmic. Residues 375-396 (LTQAICKVSEYLTFNTSLYFLP) form a helical membrane-spanning segment. The Extracellular segment spans residues 397–410 (HHLQTQFLITPGIA). Residues 411–432 (SLLTGAFVLPGGIIGHFLGGLI) form a helical membrane-spanning segment. Residues 433 to 445 (VDRLEMTNKNKLK) are Cytoplasmic-facing. A helical membrane pass occupies residues 446 to 466 (FTLVTTVVSVGLFLLIFFVEC). Over 467-565 (QTTTFAGINE…IAGTCDSDCL (99 aa)) the chain is Extracellular. Positions 485–540 (GNLTADCNEYCDCTTSLYTSICGRDEKEYFSPCFAGCKATKVSQTEKTYYNCSCIK) constitute a Kazal-like domain. An N-linked (GlcNAc...) asparagine glycan is attached at asparagine 486. Intrachain disulfides connect cysteine 491–cysteine 521, cysteine 497–cysteine 517, and cysteine 506–cysteine 538. A glycan (N-linked (GlcNAc...) asparagine) is linked at asparagine 535. A helical membrane pass occupies residues 566-589 (KLPLFFAFYFSATVFSNMCSIPVI). The Cytoplasmic segment spans residues 590 to 604 (SIILQSVPANFTSLS). The chain crosses the membrane as a helical span at residues 605–624 (LGVTYAIVKFVASVPAPLLF). At 625-652 (RLSSAIACIYWDNNRCGGKERCWIYNKN) the chain is on the extracellular side. The chain crosses the membrane as a helical span at residues 653–675 (ILVYEFMGIWMSSQLIIVLLNIY). Residues 676 to 706 (AIQIHDVVVHGEITESKTTVKDVKEQKERKA) lie on the Cytoplasmic side of the membrane.

The protein belongs to the organo anion transporter (TC 2.A.60) family. As to quaternary structure, component of the CatSper complex or CatSpermasome composed of the core pore-forming members CATSPER1, CATSPER2, CATSPER3 and CATSPER4 as well as auxiliary members CATSPERB, CATSPERG2, CATSPERD, CATSPERE, CATSPERZ, C2CD6/CATSPERT, SLCO6C1, TMEM249, TMEM262 and EFCAB9. HSPA1 may be an additional auxiliary complex member. The core complex members CATSPER1, CATSPER2, CATSPER3 and CATSPER4 form a heterotetrameric channel. The auxiliary CATSPERB, CATSPERG2, CATSPERD and CATSPERE subunits form a pavilion-like structure over the pore which stabilizes the complex through interactions with CATSPER4, CATSPER3, CATSPER1 and CATSPER2 respectively. SLCO6C1 interacts with CATSPERE and TMEM262/CATSPERH interacts with CATSPERB, further stabilizing the complex. C2CD6/CATSPERT interacts at least with CATSPERD and is required for targeting the CatSper complex in the flagellar membrane.

The protein resides in the cell projection. It is found in the cilium. It localises to the flagellum membrane. Functionally, auxiliary component of the CatSper complex, a complex involved in sperm cell hyperactivation. The polypeptide is Solute carrier organic anion transporter family member 6C1 (Mus musculus (Mouse)).